Reading from the N-terminus, the 344-residue chain is Uroporphyrinogen decarboxylase (344 aa).

Substrate is bound by residues 26-30, phenylalanine 45, aspartate 75, tyrosine 151, serine 206, and histidine 320; that span reads RQAGR.

The protein belongs to the uroporphyrinogen decarboxylase family. As to quaternary structure, homodimer.

Its subcellular location is the cytoplasm. It catalyses the reaction uroporphyrinogen III + 4 H(+) = coproporphyrinogen III + 4 CO2. It functions in the pathway porphyrin-containing compound metabolism; protoporphyrin-IX biosynthesis; coproporphyrinogen-III from 5-aminolevulinate: step 4/4. In terms of biological role, catalyzes the decarboxylation of four acetate groups of uroporphyrinogen-III to yield coproporphyrinogen-III. The protein is Uroporphyrinogen decarboxylase of Staphylococcus haemolyticus (strain JCSC1435).